Consider the following 369-residue polypeptide: 3 beta-hydroxysteroid dehydrogenase type 7 (369 aa).

Tyr159 acts as the Proton acceptor in catalysis. Lys163 contributes to the NAD(+) binding site. Helical transmembrane passes span Leu289–Leu309 and Leu312–Ser334.

The protein belongs to the 3-beta-HSD family. Predominantly expressed in liver.

The protein localises to the endoplasmic reticulum membrane. The enzyme catalyses 7alpha-hydroxycholesterol + NAD(+) = 7alpha-hydroxycholest-4-en-3-one + NADH + H(+). The catalysed reaction is 7alpha,25-dihydroxycholesterol + NAD(+) = 7alpha,25-dihydroxy-4-cholesten-3-one + NADH + H(+). It catalyses the reaction (25R)-cholest-5-en-3beta,7alpha,26-triol + NAD(+) = (25R)-7alpha,26-dihydroxycholest-4-en-3-one + NADH + H(+). It carries out the reaction (24S)-7alpha-dihydroxycholesterol + NAD(+) = (24S)-7alpha,24-dihydroxycholest-4-en-3-one + NADH + H(+). It participates in lipid metabolism; steroid biosynthesis. Its function is as follows. The 3-beta-HSD enzymatic system plays a crucial role in the biosynthesis of all classes of hormonal steroids. HSD VII is active against four 7-alpha-hydroxylated sterols. Does not metabolize several different C(19/21) steroids as substrates. Involved in bile acid synthesis. Plays a key role in cell positioning and movement in lymphoid tissues by mediating degradation of 7-alpha,25-dihydroxycholesterol (7-alpha,25-OHC): 7-alpha,25-OHC acts as a ligand for the G protein-coupled receptor GPR183/EBI2, a chemotactic receptor for a number of lymphoid cells. This Mus musculus (Mouse) protein is 3 beta-hydroxysteroid dehydrogenase type 7.